We begin with the raw amino-acid sequence, 188 residues long: Dual specificity protein phosphatase 18 (188 aa).

The region spanning 19-160 is the Tyrosine-protein phosphatase domain; sequence GLSQITKSLY…LIHYEFQLFG (142 aa). The sufficient for mitochondrial localization stretch occupies residues 95–141; sequence MKQGRTLLHCAAGVSRSAALCLAYLMKYHAMSLLDAHTWTKSCRPII. The active-site Phosphocysteine intermediate is the Cys104.

Belongs to the protein-tyrosine phosphatase family. Non-receptor class dual specificity subfamily.

It is found in the cytoplasm. It localises to the nucleus. The protein resides in the mitochondrion inner membrane. It catalyses the reaction O-phospho-L-tyrosyl-[protein] + H2O = L-tyrosyl-[protein] + phosphate. The enzyme catalyses O-phospho-L-seryl-[protein] + H2O = L-seryl-[protein] + phosphate. It carries out the reaction O-phospho-L-threonyl-[protein] + H2O = L-threonyl-[protein] + phosphate. Its function is as follows. Can dephosphorylate single and diphosphorylated synthetic MAPK peptides, with preference for the phosphotyrosine and diphosphorylated forms over phosphothreonine. In vitro, dephosphorylates p-nitrophenyl phosphate (pNPP). This is Dual specificity protein phosphatase 18 (DUSP18) from Pongo abelii (Sumatran orangutan).